Consider the following 209-residue polypeptide: ATP synthase subunit b 2 (209 aa).

A helical transmembrane segment spans residues Trp9–Phe29.

Belongs to the ATPase B chain family. As to quaternary structure, F-type ATPases have 2 components, F(1) - the catalytic core - and F(0) - the membrane proton channel. F(1) has five subunits: alpha(3), beta(3), gamma(1), delta(1), epsilon(1). F(0) has three main subunits: a(1), b(2) and c(10-14). The alpha and beta chains form an alternating ring which encloses part of the gamma chain. F(1) is attached to F(0) by a central stalk formed by the gamma and epsilon chains, while a peripheral stalk is formed by the delta and b chains.

It is found in the cell inner membrane. Functionally, f(1)F(0) ATP synthase produces ATP from ADP in the presence of a proton or sodium gradient. F-type ATPases consist of two structural domains, F(1) containing the extramembraneous catalytic core and F(0) containing the membrane proton channel, linked together by a central stalk and a peripheral stalk. During catalysis, ATP synthesis in the catalytic domain of F(1) is coupled via a rotary mechanism of the central stalk subunits to proton translocation. In terms of biological role, component of the F(0) channel, it forms part of the peripheral stalk, linking F(1) to F(0). This chain is ATP synthase subunit b 2, found in Desulfosudis oleivorans (strain DSM 6200 / JCM 39069 / Hxd3) (Desulfococcus oleovorans).